We begin with the raw amino-acid sequence, 190 residues long: Protein LZIC (190 aa).

Residues 2–63 (ASRGKTETSK…SEFNDSLKKI (62 aa)) are a coiled coil.

The protein belongs to the CTNNBIP1 family. In terms of assembly, does not interact with CTNNB1.

The protein is Protein LZIC (Lzic) of Mus musculus (Mouse).